Reading from the N-terminus, the 429-residue chain is MSAKWEKQEGNIGTLTIEVPAAEVDAAMDQAFKKVVKQINVPGFRKGKMPRKMFEQRFGIESLYQDALEIIVPDSYAKAIDEAGIMPVDYPEIAGTENFVHGQDFSFTAQVTVKPEPKLGDYKGLEVAKLPVEVTDEEVDAQIQEQLARKAELEIKEDEAIVEGDTAVIDFEGFVGDEAFEGGKGEDYPLEIGSGSFIPGFEEQLTGVKAGESKDVVVTFPEEYHAAELAGKEATFKVTVKEVKTKVLPELNDEFAKELDSEVESVEALRAKIKEQTAAQKVAESDAALRDELVEKASENAEFEVPAGMINSETDRMLQEFGQRLQTQGMNLDLYYQFSGQSEEDLRGQMKEEAESRVRVSLTLEAIAEAEKIEATEADIEAELEKMAAQFNMTKEQITGALGGTAVLENDIKIQKTVEFLVENAKITE.

Residues 164–249 (GDTAVIDFEG…VKEVKTKVLP (86 aa)) form the PPIase FKBP-type domain.

The protein belongs to the FKBP-type PPIase family. Tig subfamily.

It localises to the cytoplasm. It carries out the reaction [protein]-peptidylproline (omega=180) = [protein]-peptidylproline (omega=0). Involved in protein export. Acts as a chaperone by maintaining the newly synthesized protein in an open conformation. Functions as a peptidyl-prolyl cis-trans isomerase. The sequence is that of Trigger factor from Lysinibacillus sphaericus (strain C3-41).